The primary structure comprises 330 residues: GTPase Obg (330 aa).

The 159-residue stretch at 1-159 folds into the Obg domain; it reads MNFIDEVKIC…MWIHLSLKLL (159 aa). In terms of domain architecture, OBG-type G spans 160–327; sequence SDVGLVGLPN…IVKLALKTIK (168 aa). GTP-binding positions include 166-173, 191-195, 212-215, 279-282, and 308-310; these read GLPNAGKS, FTTLV, DIPG, NKCD, and STY. Mg(2+) contacts are provided by serine 173 and threonine 193.

This sequence belongs to the TRAFAC class OBG-HflX-like GTPase superfamily. OBG GTPase family. In terms of assembly, monomer. It depends on Mg(2+) as a cofactor.

The protein resides in the cytoplasm. In terms of biological role, an essential GTPase which binds GTP, GDP and possibly (p)ppGpp with moderate affinity, with high nucleotide exchange rates and a fairly low GTP hydrolysis rate. Plays a role in control of the cell cycle, stress response, ribosome biogenesis and in those bacteria that undergo differentiation, in morphogenesis control. The polypeptide is GTPase Obg (Rickettsia felis (strain ATCC VR-1525 / URRWXCal2) (Rickettsia azadi)).